Here is a 370-residue protein sequence, read N- to C-terminus: NADH-quinone oxidoreductase subunit D 2 (370 aa).

It belongs to the complex I 49 kDa subunit family. As to quaternary structure, NDH-1 is composed of 14 different subunits. Subunits NuoB, C, D, E, F, and G constitute the peripheral sector of the complex.

It localises to the cell inner membrane. The enzyme catalyses a quinone + NADH + 5 H(+)(in) = a quinol + NAD(+) + 4 H(+)(out). Functionally, NDH-1 shuttles electrons from NADH, via FMN and iron-sulfur (Fe-S) centers, to quinones in the respiratory chain. The immediate electron acceptor for the enzyme in this species is believed to be ubiquinone. Couples the redox reaction to proton translocation (for every two electrons transferred, four hydrogen ions are translocated across the cytoplasmic membrane), and thus conserves the redox energy in a proton gradient. The polypeptide is NADH-quinone oxidoreductase subunit D 2 (Solibacter usitatus (strain Ellin6076)).